The sequence spans 651 residues: MSAASLYPVRPEVAATTLTDEATYKAMYQQSVVNPDGFWREQAQRLDWIKPFSVVKQTSFDDHRVDIKWFADGTLNVAYNCLDRHLAERGDTIAIIWEGDDPSEHREITYRELHEEVCKFANALRGQDVHRGDVVTIYMPMIPEAVVAMLACARIGAIHSVVFGGFSPEALAGRIIDCSSKVVITADEGLRGGKKTALKANVDRALTNPETSSVQKVIVCKRTGGEIEWNRHRDIWYHALLEVASSTCAPKEMGAEESLFILYTSGSTGKPKGVLHTTAGYLLYAALTHERVFDYKPGEIYWCTADVGWVTGHSYIVYGPLANGATTLLFEGVPNYPDITRVSKIIDKHKVNILYTAPTAIRAMMAEGTKSVEGADGSSLRLLGSVGEPINPEAWGWYYNTVGKQNCPIVDTWWQTETGGILISPLPGATALKPGSATRPFFGVIPALVDNLGNLIEGAAEGNLVILDSWPGQSRTLYGDHDRFVDTYFKTFRGMYFTGDGARRDEDGYYWITGRVDDVLNVSGHRMGTAEIESAMVAHPKVAEAAVVGVPHDLKGQGIYVYVTLNAGEEPSDALRTELRNWVRKEIGPIASPDFIQWAPGLPKTRSGKIMRRILRKIATAEYDALGDISTLADPGVVQHLIETHKSMSAA.

Residues 191-194 (RGGK), T311, and N335 each bind CoA. ATP-binding positions include 387 to 389 (GEP), 411 to 416 (DTWWQT), D500, and R515. Residue S523 participates in CoA binding. R526 serves as a coordination point for ATP. Residues V537, H539, and V542 each contribute to the Mg(2+) site. R584 is a CoA binding site. The residue at position 609 (K609) is an N6-acetyllysine.

Belongs to the ATP-dependent AMP-binding enzyme family. It depends on Mg(2+) as a cofactor. In terms of processing, acetylated. Deacetylation by the SIR2-homolog deacetylase activates the enzyme.

It carries out the reaction acetate + ATP + CoA = acetyl-CoA + AMP + diphosphate. Catalyzes the conversion of acetate into acetyl-CoA (AcCoA), an essential intermediate at the junction of anabolic and catabolic pathways. AcsA undergoes a two-step reaction. In the first half reaction, AcsA combines acetate with ATP to form acetyl-adenylate (AcAMP) intermediate. In the second half reaction, it can then transfer the acetyl group from AcAMP to the sulfhydryl group of CoA, forming the product AcCoA. In Pseudomonas syringae pv. tomato (strain ATCC BAA-871 / DC3000), this protein is Acetyl-coenzyme A synthetase.